The sequence spans 125 residues: Holo-[acyl-carrier-protein] synthase (125 aa).

2 residues coordinate Mg(2+): aspartate 8 and glutamate 56.

The protein belongs to the P-Pant transferase superfamily. AcpS family. The cofactor is Mg(2+).

Its subcellular location is the cytoplasm. It carries out the reaction apo-[ACP] + CoA = holo-[ACP] + adenosine 3',5'-bisphosphate + H(+). In terms of biological role, transfers the 4'-phosphopantetheine moiety from coenzyme A to a Ser of acyl-carrier-protein. The protein is Holo-[acyl-carrier-protein] synthase of Borrelia turicatae (strain 91E135).